The chain runs to 91 residues: Gene 76 protein (91 aa).

The tract at residues 58–81 is disordered; sequence ELPSCDESPKGEARRDNDNRDGGK.

The sequence is that of Gene 76 protein (76) from Mycobacterium phage L5 (Mycobacteriophage L5).